Consider the following 629-residue polypeptide: MAASKETMQFQTEINQLLQLMIHSLYSNKEIFLRELISNASDACDKLRFEALADPALLTGDSELKVEVDFDPEAGTITVRDNGIGMNRDEVIANIGTIAKSGTREFFERLSGDQTKDAKLIGQFGVGFYSAFIVADRVSLNTRRAGMEAEHGVRWESDGTGTYTLETLDLPARGTEIVLHLREEERQDLLSAWRLRSIINKYSDHIPLSIRMRKIGEGGKPGDEWETVNKASALWQRSKSEISDDEYKEFYRYVSHDYGDPLTWSHNHVEGRLEYTSLLFIPAKAPFDLWDHNHPHGIKLYVQRVFIMDDAEQLLPRYLRFVRGVIDSSDLPLNVSREILQGNRVIDQMRSGSVKRILGLLEEMAEKEPEKYQTFWNEFGRVLKEGPGEDYSNREQIARLLRFASTHTDTDTQNVSLADYLARMAEGQDKIYYITADSFLAAKNSPQLELLRKKGIEVLLLSDRVDEWLTSHLPEFEGKALTSVAKGALDLGAIETEEERKSQEETEKDAEGLVERIKNALGERVETVRVSHRLTSSPACIVLGERDMALYMQQLLKQAGHEISSTKPVLEINPTHPMLARIEGEKDDTRFAEWSALLLDQAILAEGGQLEDPAGFVARINQLMLALAG.

The tract at residues 1-337 (MAASKETMQF…SSDLPLNVSR (337 aa)) is a; substrate-binding. The tract at residues 338–554 (EILQGNRVID…ERDMALYMQQ (217 aa)) is b. A c region spans residues 555–629 (LLKQAGHEIS…INQLMLALAG (75 aa)).

It belongs to the heat shock protein 90 family. In terms of assembly, homodimer.

It localises to the cytoplasm. Functionally, molecular chaperone. Has ATPase activity. In Acidithiobacillus ferrooxidans (strain ATCC 23270 / DSM 14882 / CIP 104768 / NCIMB 8455) (Ferrobacillus ferrooxidans (strain ATCC 23270)), this protein is Chaperone protein HtpG.